The primary structure comprises 66 residues: UPF0337 protein SAG0606 (66 aa).

Residues 1 to 10 (MSQEKLKSKV) show a composition bias toward basic and acidic residues. Residues 1 to 23 (MSQEKLKSKVEQASGSLKEGAGK) form a disordered region.

It belongs to the UPF0337 (CsbD) family.

The sequence is that of UPF0337 protein SAG0606 from Streptococcus agalactiae serotype V (strain ATCC BAA-611 / 2603 V/R).